A 620-amino-acid chain; its full sequence is Chaperone protein HscA homolog (620 aa).

Belongs to the heat shock protein 70 family.

Chaperone involved in the maturation of iron-sulfur cluster-containing proteins. Has a low intrinsic ATPase activity which is markedly stimulated by HscB. The chain is Chaperone protein HscA homolog from Shewanella sediminis (strain HAW-EB3).